The sequence spans 254 residues: Type III pantothenate kinase (254 aa).

6 to 13 (DVGNTNTT) contacts ATP. Residues Y100 and 107 to 110 (GADR) contribute to the substrate site. Residue D109 is the Proton acceptor of the active site. D129 lines the K(+) pocket. Residue T132 participates in ATP binding. T184 provides a ligand contact to substrate.

Belongs to the type III pantothenate kinase family. Homodimer. Requires NH4(+) as cofactor. The cofactor is K(+).

It localises to the cytoplasm. It catalyses the reaction (R)-pantothenate + ATP = (R)-4'-phosphopantothenate + ADP + H(+). Its pathway is cofactor biosynthesis; coenzyme A biosynthesis; CoA from (R)-pantothenate: step 1/5. Its function is as follows. Catalyzes the phosphorylation of pantothenate (Pan), the first step in CoA biosynthesis. The sequence is that of Type III pantothenate kinase from Anaeromyxobacter dehalogenans (strain 2CP-C).